The sequence spans 343 residues: L-ornithine/L-arginine 3-hydroxylase (343 aa).

Fe cation-binding residues include H147 and E149. The segment covering 199 to 215 has biased composition (polar residues); it reads MPDNSHLPQNTAESTGD. The segment at 199–218 is disordered; the sequence is MPDNSHLPQNTAESTGDPTK. Fe cation is bound at residue H302. R316 is a 2-oxoglutarate binding site.

Belongs to the clavaminate synthase family. Fe(2+) serves as cofactor.

It catalyses the reaction L-ornithine + 2-oxoglutarate + O2 = (3S)-3-hydroxy-L-ornithine + succinate + CO2. It carries out the reaction L-arginine + 2-oxoglutarate + O2 = (2S,3S)-hydroxyarginine + succinate + CO2. Alpha-ketoglutarate-dependent dioxygenase that in vitro catalyzes the regio- and stereoselective hydroxylation of L-ornithine and L-arginine, leading to (3S)-3-hydroxy-L-ornithine and (3S)-3-hydroxy-L-arginine, respectively. Cannot use L-lysine, D-ornithine, or D-arginine as substrate. This Catenulispora acidiphila (strain DSM 44928 / JCM 14897 / NBRC 102108 / NRRL B-24433 / ID139908) protein is L-ornithine/L-arginine 3-hydroxylase.